We begin with the raw amino-acid sequence, 79 residues long: U16-theraphotoxin-Cg1a (79 aa).

The first 19 residues, 1–19 (MRALLIIAGLALFLVVCNA), serve as a signal peptide directing secretion. A propeptide spanning residues 20–44 (SQVNEQRKLNEMLSVMFAVEEPQER) is cleaved from the precursor. 3 disulfides stabilise this stretch: Cys-47–Cys-62, Cys-54–Cys-67, and Cys-61–Cys-74.

It belongs to the neurotoxin 10 (Hwtx-1) family. 34 (Jztx-26) subfamily. In terms of tissue distribution, expressed by the venom gland.

It is found in the secreted. Its function is as follows. Probable ion channel inhibitor. In Chilobrachys guangxiensis (Chinese earth tiger tarantula), this protein is U16-theraphotoxin-Cg1a.